A 175-amino-acid chain; its full sequence is Large ribosomal subunit protein uL10 (175 aa).

Belongs to the universal ribosomal protein uL10 family. Part of the ribosomal stalk of the 50S ribosomal subunit. The N-terminus interacts with L11 and the large rRNA to form the base of the stalk. The C-terminus forms an elongated spine to which L12 dimers bind in a sequential fashion forming a multimeric L10(L12)X complex.

Functionally, forms part of the ribosomal stalk, playing a central role in the interaction of the ribosome with GTP-bound translation factors. The polypeptide is Large ribosomal subunit protein uL10 (Prochlorococcus marinus (strain MIT 9301)).